Here is a 315-residue protein sequence, read N- to C-terminus: 7,8-didemethyl-8-hydroxy-5-deazariboflavin synthase (315 aa).

The Radical SAM core domain occupies 6–237 (ITYSPAFTLV…EDITIQIPAN (232 aa)). Residues C20, C24, and C27 each contribute to the [4Fe-4S] cluster site.

The protein belongs to the radical SAM superfamily. CofG family. Consists of two subunits, CofG and CofH. It depends on [4Fe-4S] cluster as a cofactor.

It carries out the reaction 5-amino-5-(4-hydroxybenzyl)-6-(D-ribitylimino)-5,6-dihydrouracil + S-adenosyl-L-methionine = 7,8-didemethyl-8-hydroxy-5-deazariboflavin + 5'-deoxyadenosine + L-methionine + NH4(+) + H(+). It participates in cofactor biosynthesis; coenzyme F0 biosynthesis. Its function is as follows. Catalyzes the radical-mediated synthesis of 7,8-didemethyl-8-hydroxy-5-deazariboflavin from 5-amino-5-(4-hydroxybenzyl)-6-(D-ribitylimino)-5,6-dihydrouracil. This Thermosynechococcus vestitus (strain NIES-2133 / IAM M-273 / BP-1) protein is 7,8-didemethyl-8-hydroxy-5-deazariboflavin synthase.